The chain runs to 230 residues: Large ribosomal subunit protein uL1 (230 aa).

It belongs to the universal ribosomal protein uL1 family. In terms of assembly, part of the 50S ribosomal subunit.

In terms of biological role, binds directly to 23S rRNA. The L1 stalk is quite mobile in the ribosome, and is involved in E site tRNA release. Its function is as follows. Protein L1 is also a translational repressor protein, it controls the translation of the L11 operon by binding to its mRNA. The sequence is that of Large ribosomal subunit protein uL1 from Leptospira borgpetersenii serovar Hardjo-bovis (strain L550).